Reading from the N-terminus, the 354-residue chain is Elongation factor Ts, mitochondrial (354 aa).

Residues Met-1–Tyr-47 constitute a mitochondrion transit peptide.

It belongs to the EF-Ts family.

It localises to the mitochondrion. Its function is as follows. Associates with the EF-Tu.GDP complex and induces the exchange of GDP to GTP. It remains bound to the aminoacyl-tRNA.EF-Tu.GTP complex up to the GTP hydrolysis stage on the ribosome. This Heterostelium pallidum (strain ATCC 26659 / Pp 5 / PN500) (Cellular slime mold) protein is Elongation factor Ts, mitochondrial (tsfm).